The primary structure comprises 2212 residues: Nonribosomal peptide synthetase ftmPS (2212 aa).

The interval 74–473 is adenylation 1; the sequence is TYAELDSLSD…IEHHLQQTLP (400 aa). The region spanning 592 to 669 is the Carrier 1 domain; sequence PPSTLKETTI…EQSQRAGLIQ (78 aa). An O-(pantetheine 4'-phosphoryl)serine modification is found at Ser-629. The interval 708-973 is condensation 1; sequence EDIYPCTALQ…IATVPLRIRV (266 aa). Residues 1167–1564 form an adenylation 2 region; sequence TYRELWAHSS…LSAVEASLMR (398 aa). Positions 1678 to 1757 constitute a Carrier 2 domain; sequence PMSDDNERRL…QFRHLITEDD (80 aa). Residue Ser-1715 is modified to O-(pantetheine 4'-phosphoryl)serine. The segment at 1815–2070 is condensation 2; sequence HFQFDLSGAI…CTNYIPYRLS (256 aa).

The protein belongs to the NRP synthetase family.

It carries out the reaction L-proline + L-tryptophan + 2 ATP = brevianamide F + 2 AMP + 2 diphosphate + 2 H(+). The protein operates within mycotoxin biosynthesis. In terms of biological role, nonribosomal peptide synthetase; part of the gene cluster that mediates the biosynthesis of fumitremorgins, indole alkaloids that carry not only intriguing chemical structures, but also interesting biological and pharmacological activities. The biosynthesis of fumitremorgin-type alkaloids begins by condensation of the two amino acids L-tryptophan and L-proline to brevianamide F, catalyzed by the non-ribosomal peptide synthetase ftmPS/ftmA. Brevianamide F is then prenylated by the prenyltransferase ftmPT1/ftmB in the presence of dimethylallyl diphosphate, resulting in the formation of tryprostatin B. The three cytochrome P450 monooxygenases, ftmP450-1/ftmC, ftmP450-2/ftmE and ftmP450-3/FtmG, are responsible for the conversion of tryprostatin B to 6-hydroxytryprostatin B, tryprostatin A to fumitremorgin C and fumitremorgin C to 12,13-dihydroxyfumitremorgin C, respectively. The putative methyltransferase ftmMT/ftmD is expected for the conversion of 6-hydroxytryprostatin B to tryprostatin A. FtmPT2/FtmH catalyzes the prenylation of 12,13-dihydroxyfumitre-morgin C in the presence of dimethylallyl diphosphate, resulting in the formation of fumitremorgin B. Fumitremorgin B is further converted to verruculogen by ftmOx1/ftmF via the insertion of an endoperoxide bond between the two prenyl moieties. Finally, verruculogen is further converted to fumitremorgin A by the verruculogen prenyltransferase ftmPT3. This chain is Nonribosomal peptide synthetase ftmPS (ftmPS), found in Neosartorya fischeri (strain ATCC 1020 / DSM 3700 / CBS 544.65 / FGSC A1164 / JCM 1740 / NRRL 181 / WB 181) (Aspergillus fischerianus).